Here is a 201-residue protein sequence, read N- to C-terminus: Recombination protein RecR (201 aa).

The C4-type zinc finger occupies C57–C72. The Toprim domain maps to T80 to P176.

The protein belongs to the RecR family.

Functionally, may play a role in DNA repair. It seems to be involved in an RecBC-independent recombinational process of DNA repair. It may act with RecF and RecO. This Ureaplasma urealyticum serovar 10 (strain ATCC 33699 / Western) protein is Recombination protein RecR.